Consider the following 61-residue polypeptide: Small ribosomal subunit protein uS14 (61 aa).

Positions 24, 27, 40, and 43 each coordinate Zn(2+).

Belongs to the universal ribosomal protein uS14 family. Zinc-binding uS14 subfamily. Part of the 30S ribosomal subunit. Contacts proteins S3 and S10. Zn(2+) serves as cofactor.

Binds 16S rRNA, required for the assembly of 30S particles and may also be responsible for determining the conformation of the 16S rRNA at the A site. The protein is Small ribosomal subunit protein uS14 of Leptospira borgpetersenii serovar Hardjo-bovis (strain JB197).